The sequence spans 321 residues: Bifunctional ligase/repressor BirA (321 aa).

The H-T-H motif DNA-binding region spans 22 to 41 (GEQLGETLGMSRAAINKHIQ). The region spanning 67-254 (LNAKQILGQL…ELRAALELFE (188 aa)) is the BPL/LPL catalytic domain. Biotin contacts are provided by residues 89 to 91 (STN), glutamine 112, 116 to 118 (RGR), and lysine 183.

It belongs to the biotin--protein ligase family. In terms of assembly, monomer in solution. Interacts with BCCP. Homodimerizes to bind DNA. Interaction with the corepressor bio-5'-AMP increases dimerization.

It carries out the reaction biotin + L-lysyl-[protein] + ATP = N(6)-biotinyl-L-lysyl-[protein] + AMP + diphosphate + H(+). The switch between the enzymatic activity and the repressor activity is regulated by cellular demand for biotin. The switch occurs by swapping of protein interaction partners by holoBirA. In conditions of high biotin demand, holoBirA associates with apoBCCP to transfer biotin. In conditions of low biotin demand, holoBirA dimerizes, binds DNA and represses transcription of the biotin operon. Its function is as follows. Acts both as a biotin--[acetyl-CoA-carboxylase] ligase and a biotin-operon repressor. In the presence of ATP, BirA activates biotin to form the BirA-biotinyl-5'-adenylate (BirA-bio-5'-AMP or holoBirA) complex. HoloBirA can either transfer the biotinyl moiety to the biotin carboxyl carrier protein (BCCP) subunit of acetyl-CoA carboxylase, or bind to the biotin operator site and inhibit transcription of the operon. In Escherichia coli (strain K12), this protein is Bifunctional ligase/repressor BirA.